We begin with the raw amino-acid sequence, 349 residues long: Putative F-box/LRR-repeat protein At3g16555 (349 aa).

One can recognise an F-box domain in the interval 1-48; it reads MVLLPWELEEDILSRLPPRSLVQFRSVCKRWNALFDVKSFNKDQFARA. The stretch at 267–290 is one LRR repeat; sequence VVWISLLTLPPNNLPNLFIVCYGI.

In Arabidopsis thaliana (Mouse-ear cress), this protein is Putative F-box/LRR-repeat protein At3g16555.